The following is a 270-amino-acid chain: Tryptophan synthase alpha chain (270 aa).

Active-site proton acceptor residues include Glu-49 and Asp-60.

Belongs to the TrpA family. As to quaternary structure, tetramer of two alpha and two beta chains.

The catalysed reaction is (1S,2R)-1-C-(indol-3-yl)glycerol 3-phosphate + L-serine = D-glyceraldehyde 3-phosphate + L-tryptophan + H2O. It functions in the pathway amino-acid biosynthesis; L-tryptophan biosynthesis; L-tryptophan from chorismate: step 5/5. In terms of biological role, the alpha subunit is responsible for the aldol cleavage of indoleglycerol phosphate to indole and glyceraldehyde 3-phosphate. This is Tryptophan synthase alpha chain from Buchnera aphidicola subsp. Diuraphis noxia.